We begin with the raw amino-acid sequence, 351 residues long: Phosphate acyltransferase (351 aa).

Belongs to the PlsX family. As to quaternary structure, homodimer. Probably interacts with PlsY.

Its subcellular location is the cytoplasm. It carries out the reaction a fatty acyl-[ACP] + phosphate = an acyl phosphate + holo-[ACP]. Its pathway is lipid metabolism; phospholipid metabolism. Its function is as follows. Catalyzes the reversible formation of acyl-phosphate (acyl-PO(4)) from acyl-[acyl-carrier-protein] (acyl-ACP). This enzyme utilizes acyl-ACP as fatty acyl donor, but not acyl-CoA. The protein is Phosphate acyltransferase of Neisseria meningitidis serogroup A / serotype 4A (strain DSM 15465 / Z2491).